The chain runs to 816 residues: MKFAIAFLACVAVVTATAYHKTHDIKVADKAFLMKQKFLFEIVYRVEDPLMFEEYIAMGKQFYFDKEHYTHFDLYMEKFFEAHKAHALLPKGEFFGALVKHHAKQARGLFNFFYYAKDWETFMTNVAFARMHFNEGMFVYALTLAVIHRDDFHGLVLPAIHEIFPQFFFNSKFVMEAEKFDYEMWMKTSLYEKEYMDVYHKIPTFSSYEHGYKQGMAYGYGKTHGHGQTYEHEFGSMYQTSDYMYMKDFKTWQWWKLMGLGEHWYSESNYILRENIYEYNQESNWLTMMKDVKKFYMPVDYSRDLYLYNEESKLSYFTEDLGWNSYWYYLNMDYSFFLDGKTFGLQNDRRGEWWLYNVHQLLSRYHMERLSHGLGEIPQFSWFHQIEMGYDPQLIYYNGIGYSYRKNYYELETYGNFEMLDKITGFQQRIQNIVELGYYQTTDGHMIDLRKPESIEIIGNMLQGNVDAIDNIFFQFWYMLAHMYFADTHYYQMEVYPNVMLNFETMMRDPMFYMFYKSIAQVYFQFMHHLPKYTKEQLLMPGVTLKHVEVSELVTYFDLVDFDVTNMLNGKMVFHEGQFLWDKSLFARQMRLNHKPFSYTYTIDSARDEKVVIRAFLGPKFDEYGRMISLTDNRMNFMEIDEFTYTLKTGSNLITRKSTDFAWTVKDRTTYTELYYYTMMAFDGKYDYPLDLTEPHCGFPDRLVLPMGWKKGMPMQMFFMVVPYMAPQHEQFSTFDYTYSCGIGSGARHVDSLPFGYPFDREINEYEFHVPNMYFKDVTIYHADTMEKYYNYKEYTNYGHFDYSFFNDYYTKYFKL.

An N-terminal signal peptide occupies residues M1–A16.

It belongs to the hemocyanin family. As to quaternary structure, heterohexamer, composed of three subunits, alpha, beta and gamma. Larval hemolymph.

The protein localises to the secreted. The protein resides in the extracellular space. Its function is as follows. Larval storage protein (LSP) which may serve as a store of amino acids for synthesis of adult proteins. This Drosophila melanogaster (Fruit fly) protein is Larval serum protein 1 alpha chain (Lsp1alpha).